Reading from the N-terminus, the 89-residue chain is Small ribosomal subunit protein uS15 (89 aa).

It belongs to the universal ribosomal protein uS15 family. As to quaternary structure, part of the 30S ribosomal subunit. Forms a bridge to the 50S subunit in the 70S ribosome, contacting the 23S rRNA.

In terms of biological role, one of the primary rRNA binding proteins, it binds directly to 16S rRNA where it helps nucleate assembly of the platform of the 30S subunit by binding and bridging several RNA helices of the 16S rRNA. Functionally, forms an intersubunit bridge (bridge B4) with the 23S rRNA of the 50S subunit in the ribosome. This is Small ribosomal subunit protein uS15 from Pseudomonas fluorescens (strain SBW25).